Consider the following 157-residue polypeptide: Putative pre-16S rRNA nuclease (157 aa).

It belongs to the YqgF nuclease family.

It localises to the cytoplasm. Its function is as follows. Could be a nuclease involved in processing of the 5'-end of pre-16S rRNA. This is Putative pre-16S rRNA nuclease from Orientia tsutsugamushi (strain Ikeda) (Rickettsia tsutsugamushi).